Reading from the N-terminus, the 450-residue chain is IMP-specific 5'-nucleotidase 1 (450 aa).

Residue His144 participates in ATP binding. The active-site Nucleophile is the Asp172. Residues Asp172, Asp174, Asp180, Thr208, Asp376, and Lys384 each contribute to the IMP site. Positions 172 and 174 each coordinate Mg(2+). Asp174 (proton donor) is an active-site residue. Asp411 contacts Mg(2+).

The protein belongs to the ISN1 family. As to quaternary structure, homotetramer. Requires Mg(2+) as cofactor.

It carries out the reaction IMP + H2O = inosine + phosphate. Its activity is regulated as follows. Allosterically activated by ATP. ATP binding is a prerequisite to magnesium and substrate binding. ATP binds to 2 of the subunits in the homotetramer inducing a closure of these 2 subunits and the release of the C-terminal loop, thereby activating the enzyme. Functionally, IMP-specific 5'-nucleotidase involved in IMP (inosine 5'-phosphate) degradation. The chain is IMP-specific 5'-nucleotidase 1 (ISN1) from Saccharomyces cerevisiae (strain ATCC 204508 / S288c) (Baker's yeast).